A 493-amino-acid chain; its full sequence is Phenmedipham hydrolase (493 aa).

Ser188 functions as the Acyl-ester intermediate in the catalytic mechanism. Residues Glu307 and His402 each act as charge relay system in the active site.

Belongs to the type-B carboxylesterase/lipase family. As to quaternary structure, monomer.

Functionally, may degrade the phenylcarbamate herbicides phenmedipham and desmedipham cometabolically by hydrolyzing their central carbamate linkages. Conveys resistance to the herbicide phenmedipham. The polypeptide is Phenmedipham hydrolase (pcd) (Pseudarthrobacter oxydans (Arthrobacter oxydans)).